The following is a 235-amino-acid chain: 6-carboxyhexanoate--CoA ligase (235 aa).

Belongs to the BioW family. As to quaternary structure, homodimer. Mg(2+) is required as a cofactor.

It carries out the reaction heptanedioate + ATP + CoA = 6-carboxyhexanoyl-CoA + AMP + diphosphate. The protein operates within metabolic intermediate metabolism; pimeloyl-CoA biosynthesis; pimeloyl-CoA from pimelate: step 1/1. Functionally, catalyzes the transformation of pimelate into pimeloyl-CoA with concomitant hydrolysis of ATP to AMP. The polypeptide is 6-carboxyhexanoate--CoA ligase (Desulfovibrio desulfuricans (strain ATCC 27774 / DSM 6949 / MB)).